The chain runs to 512 residues: Alpha-1B-glycoprotein (512 aa).

Residues methionine 1–glycine 18 form the signal peptide. Ig-like V-type domains lie at methionine 22–lysine 126, glutamate 127–serine 219, glutamine 220–leucine 312, methionine 313–asparagine 415, and glycine 416–glycine 512. N-linked (GlcNAc...) asparagine glycans are attached at residues asparagine 44, asparagine 89, and asparagine 192. 5 cysteine pairs are disulfide-bonded: cysteine 49/cysteine 96, cysteine 153/cysteine 195, cysteine 245/cysteine 292, cysteine 343/cysteine 392, and cysteine 441/cysteine 488. N-linked (GlcNAc...) asparagine glycans are attached at residues asparagine 369, asparagine 381, asparagine 389, and asparagine 485.

Interacts with CRISP3. Expressed in the liver hepatocytes of male and female GH transgenic mice and in the liver of female, but not of male, non-transgenic mice.

Its subcellular location is the secreted. The chain is Alpha-1B-glycoprotein (A1bg) from Mus musculus (Mouse).